A 244-amino-acid polypeptide reads, in one-letter code: 2-C-methyl-D-erythritol 4-phosphate cytidylyltransferase (244 aa).

The protein belongs to the IspD/TarI cytidylyltransferase family. IspD subfamily.

It catalyses the reaction 2-C-methyl-D-erythritol 4-phosphate + CTP + H(+) = 4-CDP-2-C-methyl-D-erythritol + diphosphate. Its pathway is isoprenoid biosynthesis; isopentenyl diphosphate biosynthesis via DXP pathway; isopentenyl diphosphate from 1-deoxy-D-xylulose 5-phosphate: step 2/6. Catalyzes the formation of 4-diphosphocytidyl-2-C-methyl-D-erythritol from CTP and 2-C-methyl-D-erythritol 4-phosphate (MEP). The protein is 2-C-methyl-D-erythritol 4-phosphate cytidylyltransferase of Solibacter usitatus (strain Ellin6076).